The following is a 65-amino-acid chain: Large ribosomal subunit protein bL35 (65 aa).

Residues 1–25 (MPKMKSHRGAAKRFKKTGTGKLKRA) are disordered.

This sequence belongs to the bacterial ribosomal protein bL35 family.

The chain is Large ribosomal subunit protein bL35 from Clostridium botulinum (strain Alaska E43 / Type E3).